The chain runs to 513 residues: Fumarate reductase (513 aa).

41 to 55 is a binding site for FAD; sequence AIVIGGGLAGLSATN. Phosphoserine is present on Ser100. Catalysis depends on residues His288 and Arg311.

This sequence belongs to the FAD-dependent oxidoreductase 2 family. FRD/SDH subfamily. Requires FAD as cofactor.

It localises to the cytoplasm. The protein localises to the mitochondrion. The protein resides in the nucleus. It carries out the reaction succinate + NAD(+) = fumarate + NADH + H(+). In terms of biological role, irreversibly catalyzes the reduction of fumarate to succinate. The sequence is that of Fumarate reductase (osm1) from Schizosaccharomyces pombe (strain 972 / ATCC 24843) (Fission yeast).